The primary structure comprises 603 residues: Aquaporin-2 (603 aa).

A helical transmembrane segment spans residues 40–70 (SLKKYKYNLFFEFIGSFLFVFFISIYMLNSN). 2 stretches are compositionally biased toward basic and acidic residues: residues 135 to 149 (NNKSKREVERDDDKI) and 156 to 190 (EFEKDNEKKKNYDNINEKEISTTSDGKIKDMEDPK). The interval 135–200 (NNKSKREVER…NISNKNENYD (66 aa)) is disordered. A compositionally biased stretch (polar residues) spans 191-200 (NISNKNENYD). The next 5 helical transmembrane spans lie at 282-299 (HAIYSFVGCFIYVIFILL), 321-346 (FALSTLYITFQYFGGIVASIICAHLY), 360-393 (IIKTFLCEFISTFLITLLLLSLYNYKKKFMEENK), 442-471 (NKYIKYIMNHIFYLLFIFFSLLFFVFVTNT), and 509-542 (ITKIFQLLIFYIQSLPLWIGPYFGSAFAATFLSL).

The protein belongs to the MIP/aquaporin (TC 1.A.8) family.

The protein localises to the endomembrane system. It carries out the reaction H2O(in) = H2O(out). The catalysed reaction is glycerol(in) = glycerol(out). Functionally, required for sporozoite development in the mosquito vector. The sequence is that of Aquaporin-2 from Plasmodium falciparum (isolate NF54).